A 357-amino-acid polypeptide reads, in one-letter code: SUN domain-containing protein 3 (357 aa).

The Nuclear portion of the chain corresponds to 1–47 (MSGKTKARRAAMFFRRCSEDASGSASGNALLSEDENPDANGVTRSWK). The chain crosses the membrane as a helical span at residues 48 to 64 (IILSTMLTLTFLLVGLL). Residues 65–357 (NHQWLKETDV…RVHGTPGKHI (293 aa)) are Perinuclear space-facing. A coiled-coil region spans residues 98–146 (RLRMPKEQLELLKKESQNLENNFRQILFLIEQIDVLKALLRDMKDGMDN). The 162-residue stretch at 193–354 (GASIIEAGTS…YRFRVHGTPG (162 aa)) folds into the SUN domain.

As to quaternary structure, self-associates. Interacts with SYNE1 and SPAG4/SUN4. Proposed to form a spermatogenesis-specific LINC complex with SYNE1 during sperm head formation possibly implicating a SUN domain-based heterotrimer with SPAG4/SUN4 associating with SYNE1.

The protein resides in the membrane. It is found in the nucleus envelope. The protein localises to the nucleus inner membrane. As a probable component of the LINC (LInker of Nucleoskeleton and Cytoskeleton) complex, involved in the connection between the nuclear lamina and the cytoskeleton. The nucleocytoplasmic interactions established by the LINC complex play an important role in the transmission of mechanical forces across the nuclear envelope and in nuclear movement and positioning. May be involved in nuclear remodeling during sperm head formation in spermatogenesis. A probable SUN3:SYNE1 LINC complex may tether spermatid nuclei to posterior cytoskeletal structures such as the manchette. This is SUN domain-containing protein 3 (SUN3) from Homo sapiens (Human).